The primary structure comprises 859 residues: Leucine--tRNA ligase (859 aa).

The short motif at 42-52 (PYPSGRLHMGH) is the 'HIGH' region element. The short motif at 618–622 (KMSKS) is the 'KMSKS' region element. Position 621 (lysine 621) interacts with ATP.

The protein belongs to the class-I aminoacyl-tRNA synthetase family.

It localises to the cytoplasm. The catalysed reaction is tRNA(Leu) + L-leucine + ATP = L-leucyl-tRNA(Leu) + AMP + diphosphate. The polypeptide is Leucine--tRNA ligase (Shewanella baltica (strain OS195)).